The chain runs to 53 residues: Large ribosomal subunit protein eL40 (53 aa).

The protein belongs to the eukaryotic ribosomal protein eL40 family.

The polypeptide is Large ribosomal subunit protein eL40 (Pyrobaculum calidifontis (strain DSM 21063 / JCM 11548 / VA1)).